We begin with the raw amino-acid sequence, 201 residues long: Large ribosomal subunit protein uL4 (201 aa).

The interval 45–66 (AQKSRAEVVGSNKKPWRQKGTG) is disordered.

This sequence belongs to the universal ribosomal protein uL4 family. As to quaternary structure, part of the 50S ribosomal subunit.

One of the primary rRNA binding proteins, this protein initially binds near the 5'-end of the 23S rRNA. It is important during the early stages of 50S assembly. It makes multiple contacts with different domains of the 23S rRNA in the assembled 50S subunit and ribosome. In terms of biological role, forms part of the polypeptide exit tunnel. The polypeptide is Large ribosomal subunit protein uL4 (Baumannia cicadellinicola subsp. Homalodisca coagulata).